We begin with the raw amino-acid sequence, 670 residues long: Tripeptidyl-peptidase SED1 (670 aa).

Positions 1-20 (MSTMIFMYFIYIVLYASGIA) are cleaved as a signal peptide. The propeptide at 21-231 (ANLSYHVHEK…VGLLKNKILS (211 aa)) is removed in mature form. The Peptidase S53 domain occupies 241–669 (LITPDCLRAL…DRMLDLFLQL (429 aa)). Residues glutamate 318 and aspartate 322 each act as charge relay system in the active site. 5 N-linked (GlcNAc...) asparagine glycosylation sites follow: asparagine 334, asparagine 387, asparagine 488, asparagine 508, and asparagine 551. The active-site Charge relay system is the serine 586. Positions 627, 628, 647, and 649 each coordinate Ca(2+).

The cofactor is Ca(2+).

It localises to the secreted. It is found in the extracellular space. The enzyme catalyses Release of an N-terminal tripeptide from a polypeptide.. Its function is as follows. Secreted tripeptidyl-peptidase which degrades proteins at acidic pHs and is involved in virulence. The sequence is that of Tripeptidyl-peptidase SED1 (SED1) from Arthroderma otae (strain ATCC MYA-4605 / CBS 113480) (Microsporum canis).